We begin with the raw amino-acid sequence, 247 residues long: Ubiquinone biosynthesis O-methyltransferase (247 aa).

Residues Arg-39, Gly-70, Asp-91, and Met-134 each coordinate S-adenosyl-L-methionine.

This sequence belongs to the methyltransferase superfamily. UbiG/COQ3 family.

The enzyme catalyses a 3-demethylubiquinol + S-adenosyl-L-methionine = a ubiquinol + S-adenosyl-L-homocysteine + H(+). It catalyses the reaction a 3-(all-trans-polyprenyl)benzene-1,2-diol + S-adenosyl-L-methionine = a 2-methoxy-6-(all-trans-polyprenyl)phenol + S-adenosyl-L-homocysteine + H(+). It functions in the pathway cofactor biosynthesis; ubiquinone biosynthesis. O-methyltransferase that catalyzes the 2 O-methylation steps in the ubiquinone biosynthetic pathway. This Cereibacter sphaeroides (strain ATCC 17023 / DSM 158 / JCM 6121 / CCUG 31486 / LMG 2827 / NBRC 12203 / NCIMB 8253 / ATH 2.4.1.) (Rhodobacter sphaeroides) protein is Ubiquinone biosynthesis O-methyltransferase.